The chain runs to 256 residues: Trypsin alpha (256 aa).

Positions 1-22 are cleaved as a signal peptide; the sequence is MLKIVILLSAVVCALGGTVPEG. Positions 23–30 are cleaved as a propeptide — activation peptide; that stretch reads LLPQLDGR. In terms of domain architecture, Peptidase S1 spans 31–254; sequence IVGGSATTIS…LRSWVVSTAN (224 aa). An intrachain disulfide couples cysteine 56 to cysteine 72. Residues histidine 71 and aspartate 116 each act as charge relay system in the active site. Intrachain disulfides connect cysteine 180-cysteine 197 and cysteine 206-cysteine 230. Catalysis depends on serine 210, which acts as the Charge relay system.

This sequence belongs to the peptidase S1 family. As to expression, synthesized in the midgut of both larvae and adults, primarily in the ventriculus and gastric caeca.

Its subcellular location is the secreted. It localises to the extracellular space. The enzyme catalyses Preferential cleavage: Arg-|-Xaa, Lys-|-Xaa.. In Drosophila melanogaster (Fruit fly), this protein is Trypsin alpha (alphaTry).